The following is a 418-amino-acid chain: AP-1 complex subunit mu (418 aa).

The 242-residue stretch at 176-417 (NNEAYFDVTE…VTKAGKFQVR (242 aa)) folds into the MHD domain.

It belongs to the adaptor complexes medium subunit family. Adaptor protein complex 1 (AP-1) is a heterotetramer composed of two large adaptins (gamma- and beta'-type subunits), a medium adaptin (mu-type subunit AP47) and a small adaptin (sigma-type subunit AP19). In terms of processing, regulated by phosphorylation.

It is found in the golgi apparatus. It localises to the cytoplasmic vesicle. The protein resides in the clathrin-coated vesicle membrane. Functionally, component of the adapter complexes which link clathrin to receptors in coated vesicles. Clathrin-associated protein complexes are believed to interact with the cytoplasmic tails of membrane proteins, leading to their selection and concentration. AP47 is a subunit of the plasma membrane adapter. The protein is AP-1 complex subunit mu of Diplobatis ommata (Ocellated electric ray).